The following is a 283-amino-acid chain: Protein FdhE homolog (283 aa).

Belongs to the FdhE family.

Its subcellular location is the cytoplasm. In terms of biological role, necessary for formate dehydrogenase activity. In Aquifex aeolicus (strain VF5), this protein is Protein FdhE homolog.